Reading from the N-terminus, the 300-residue chain is NAD kinase (300 aa).

The active-site Proton acceptor is the aspartate 75. Residues 75–76 (DG), 149–150 (ND), arginine 177, aspartate 179, 190–195 (TAYALS), alanine 214, and glutamine 248 contribute to the NAD(+) site.

Belongs to the NAD kinase family. It depends on a divalent metal cation as a cofactor.

It localises to the cytoplasm. It carries out the reaction NAD(+) + ATP = ADP + NADP(+) + H(+). Functionally, involved in the regulation of the intracellular balance of NAD and NADP, and is a key enzyme in the biosynthesis of NADP. Catalyzes specifically the phosphorylation on 2'-hydroxyl of the adenosine moiety of NAD to yield NADP. This chain is NAD kinase, found in Burkholderia cenocepacia (strain HI2424).